A 202-amino-acid chain; its full sequence is Large ribosomal subunit protein bL9 (202 aa).

A disordered region spans residues 168–202; the sequence is DEAGFTEDYDPNAEPGEIPTELQDEAPAAEATDEA. Residues 192 to 202 show a composition bias toward low complexity; it reads EAPAAEATDEA.

The protein belongs to the bacterial ribosomal protein bL9 family.

Binds to the 23S rRNA. The sequence is that of Large ribosomal subunit protein bL9 from Rhizorhabdus wittichii (strain DSM 6014 / CCUG 31198 / JCM 15750 / NBRC 105917 / EY 4224 / RW1) (Sphingomonas wittichii).